A 283-amino-acid chain; its full sequence is Probable endonuclease 4 (283 aa).

Zn(2+)-binding residues include H69, H109, E144, D178, H181, H215, D228, H230, and E260.

This sequence belongs to the AP endonuclease 2 family. Zn(2+) serves as cofactor.

The enzyme catalyses Endonucleolytic cleavage to 5'-phosphooligonucleotide end-products.. Functionally, endonuclease IV plays a role in DNA repair. It cleaves phosphodiester bonds at apurinic or apyrimidinic (AP) sites, generating a 3'-hydroxyl group and a 5'-terminal sugar phosphate. This is Probable endonuclease 4 from Thermosipho melanesiensis (strain DSM 12029 / CIP 104789 / BI429).